The primary structure comprises 173 residues: Large ribosomal RNA subunit accumulation protein YceD (173 aa).

Belongs to the DUF177 domain family.

Plays a role in synthesis, processing and/or stability of 23S rRNA. This is Large ribosomal RNA subunit accumulation protein YceD (yceD) from Salmonella typhi.